Reading from the N-terminus, the 262-residue chain is MSEQEVTYSMVRFHKSAGLQKQVRPEETKGPREAGYRRCSFHWKFIVIALGIFCFLLLVAVSVLAIKIFQYDQQKNCEEFLNHHNNCSNMQSDINLKDEMLKNKSIECDLLESLNRDQNRLYNKTKTVLDSLQHTGRGDKVYWFCYGMKCYYFVMDRKTWSGCKQACQSSSLSLLKIDDEDELKFLQLVVPSDSCWVGLSYDNKKKDWAWIDNRPSKLALNTGKYNIRDGGCMLLSKTRLDNGNCDQVFICICGKRLDKFPH.

The Cytoplasmic portion of the chain corresponds to 1-44; it reads MSEQEVTYSMVRFHKSAGLQKQVRPEETKGPREAGYRRCSFHWK. Residues 45–66 form a helical; Signal-anchor for type II membrane protein membrane-spanning segment; sequence FIVIALGIFCFLLLVAVSVLAI. The Extracellular segment spans residues 67 to 262; that stretch reads KIFQYDQQKN…CGKRLDKFPH (196 aa). Residues Asn-86, Asn-103, and Asn-123 are each glycosylated (N-linked (GlcNAc...) asparagine). Residues 137 to 139 carry the Cell attachment site motif; the sequence is RGD. One can recognise a C-type lectin domain in the interval 138 to 257; it reads GDKVYWFCYG…VFICICGKRL (120 aa). 4 disulfides stabilise this stretch: Cys-145–Cys-150, Cys-163–Cys-251, Cys-167–Cys-253, and Cys-232–Cys-245.

In terms of assembly, homodimer; disulfide-linked. In terms of tissue distribution, high, in T-lymphoma lines, very low in normal lymphocytes.

The protein localises to the membrane. Functionally, receptor on natural killer (NK) cells for H-2d alleles. Inhibits the activity of NK cells thus preventing cell lysis. This chain is T-cell surface glycoprotein YE1/48 (Klra1), found in Mus musculus (Mouse).